A 546-amino-acid chain; its full sequence is Sterol O-acyltransferase 1 (546 aa).

N-acetylmethionine is present on Met1. Residues 1–37 are disordered; that stretch reads MVGEEKMSLRNRLSKSGENPEQDEAQRSVSDTQSNGR. Over 1–134 the chain is Cytoplasmic; the sequence is MVGEEKMSLR…LDELFEVDHI (134 aa). Residue Ser8 is modified to Phosphoserine. Polar residues predominate over residues 27–37; it reads RSVSDTQSNGR. Cholesterol is bound at residue His133. The chain crosses the membrane as a helical span at residues 135–156; sequence RTIYHMFIGLLILFILSTLVVD. At 157 to 176 the chain is on the lumenal side; the sequence is YIDEGRLVLEFNLLGYAFGK. The chain crosses the membrane as a helical span at residues 177–202; that stretch reads LPTVIWTWWAMFLSTLSIPYFLFQRW. The Cytoplasmic segment spans residues 203–214; sequence AHGYSKTSHPLI. A helical transmembrane segment spans residues 215 to 240; that stretch reads YSLSHGFFFLVFQLGILGFVPTYVVL. The Lumenal segment spans residues 241–248; the sequence is AYTLPPAS. A helical transmembrane segment spans residues 249–272; sequence RFIVILEQIRMVMKAHSFVRENVP. The Cytoplasmic portion of the chain corresponds to 273-315; it reads RVLNAAKEKSSTVPVPTVNQYLYFLFAPTLIYRDSYPRTPTVR. The helical transmembrane segment at 316 to 348 threads the bilayer; sequence WGYVAVQFLQVFGCLFYVYYIFERLCAPLFRNI. The Lumenal segment spans residues 349-365; the sequence is KQEPFSARVLVLCVFNS. Residues 366–391 form a helical membrane-spanning segment; sequence ILPGVLMLFLTFFAFLHCWLNAFAEM. The Cytoplasmic portion of the chain corresponds to 392–439; that stretch reads LRFGDRMFYKDWWNSTSYSNYYRTWNVVVHDWLYYYAYKDLLWFFSKR. An FYXDWWN motif motif is present at residues 399–405; the sequence is FYKDWWN. The an acyl-CoA site is built by Asn411, Arg414, Asn417, His421, Tyr429, Lys441, and Ser452. A helical transmembrane segment spans residues 440–464; it reads FKSAAMLAVFALSAVVHEYALAVCL. His456 is a catalytic residue. At 465-470 the chain is on the lumenal side; that stretch reads SYFYPV. Residues 471 to 486 form a helical membrane-spanning segment; it reads LFVLFMFFGMAFNFIV. At 487-492 the chain is on the cytoplasmic side; that stretch reads NDSRKR. The helical transmembrane segment at 493–524 threads the bilayer; sequence PIWNIMVWASLFLGHGVILCFYSQEWYARQHC. Cys524 and Cys542 are joined by a disulfide. Over 525–546 the chain is Lumenal; it reads PLKNPTFLDYVRPRSWTCQYVF.

Belongs to the membrane-bound acyltransferase family. Sterol o-acyltransferase subfamily. As to quaternary structure, may form homo- or heterodimers. Interacts with UBIAD1.

Its subcellular location is the endoplasmic reticulum membrane. The catalysed reaction is a sterol + a long-chain fatty acyl-CoA = a long-chain 3-hydroxysterol ester + CoA. It catalyses the reaction cholesterol + an acyl-CoA = a cholesterol ester + CoA. It carries out the reaction cholesterol + (9Z)-octadecenoyl-CoA = cholesteryl (9Z-octadecenoate) + CoA. The enzyme catalyses cholesterol + hexadecanoyl-CoA = cholesteryl hexadecanoate + CoA. The catalysed reaction is octadecanoyl-CoA + cholesterol = cholesteryl octadecanoate + CoA. It catalyses the reaction (9Z,12Z)-octadecadienoyl-CoA + cholesterol = cholesteryl (9Z,12Z)-octadecadienoate + CoA. It carries out the reaction (5Z,8Z,11Z,14Z)-eicosatetraenoyl-CoA + cholesterol = cholesteryl (5Z,8Z,11Z,14Z)-eicosatetraenoate + CoA. The enzyme catalyses (9Z)-hexadecenoyl-CoA + cholesterol = cholesteryl (9Z)-hexadecenoate + CoA. The catalysed reaction is (11Z)-octadecenoyl-CoA + cholesterol = cholesteryl (11Z)-octadecenoate + CoA. It catalyses the reaction (7Z)-octadecenoyl-CoA + cholesterol = cholesteryl (7Z)-octadecenoate + CoA. Catalyzes the formation of fatty acid-cholesterol esters, which are less soluble in membranes than cholesterol. Plays a role in lipoprotein assembly and dietary cholesterol absorption. Preferentially utilizes oleoyl-CoA ((9Z)-octadecenoyl-CoA) as a substrate: shows a higher activity towards an acyl-CoA substrate with a double bond at the delta-9 position (9Z) than towards saturated acyl-CoA or an unsaturated acyl-CoA with a double bond at the delta-7 (7Z) or delta-11 (11Z) positions. The chain is Sterol O-acyltransferase 1 (SOAT1) from Cricetulus griseus (Chinese hamster).